The following is a 422-amino-acid chain: Enolase (422 aa).

Glutamine 161 is a (2R)-2-phosphoglycerate binding site. Glutamate 203 functions as the Proton donor in the catalytic mechanism. 3 residues coordinate Mg(2+): aspartate 240, glutamate 283, and aspartate 310. The (2R)-2-phosphoglycerate site is built by lysine 335, arginine 364, serine 365, and lysine 386. Lysine 335 (proton acceptor) is an active-site residue.

The protein belongs to the enolase family. The cofactor is Mg(2+).

The protein resides in the cytoplasm. The protein localises to the secreted. It localises to the cell surface. The enzyme catalyses (2R)-2-phosphoglycerate = phosphoenolpyruvate + H2O. Its pathway is carbohydrate degradation; glycolysis; pyruvate from D-glyceraldehyde 3-phosphate: step 4/5. Its function is as follows. Catalyzes the reversible conversion of 2-phosphoglycerate (2-PG) into phosphoenolpyruvate (PEP). It is essential for the degradation of carbohydrates via glycolysis. This Deinococcus geothermalis (strain DSM 11300 / CIP 105573 / AG-3a) protein is Enolase.